The sequence spans 232 residues: 7-cyano-7-deazaguanine synthase (232 aa).

ATP is bound at residue F8 to L18. 4 residues coordinate Zn(2+): C189, C198, C201, and C204.

It belongs to the QueC family. Requires Zn(2+) as cofactor.

It catalyses the reaction 7-carboxy-7-deazaguanine + NH4(+) + ATP = 7-cyano-7-deazaguanine + ADP + phosphate + H2O + H(+). Its pathway is purine metabolism; 7-cyano-7-deazaguanine biosynthesis. Catalyzes the ATP-dependent conversion of 7-carboxy-7-deazaguanine (CDG) to 7-cyano-7-deazaguanine (preQ(0)). The protein is 7-cyano-7-deazaguanine synthase of Yersinia pseudotuberculosis serotype O:1b (strain IP 31758).